The chain runs to 332 residues: Ferredoxin--NADP reductase (332 aa).

FAD-binding residues include D33, Q41, Y46, A86, F120, D286, and T327.

This sequence belongs to the ferredoxin--NADP reductase type 2 family. In terms of assembly, homodimer. Requires FAD as cofactor.

It carries out the reaction 2 reduced [2Fe-2S]-[ferredoxin] + NADP(+) + H(+) = 2 oxidized [2Fe-2S]-[ferredoxin] + NADPH. The chain is Ferredoxin--NADP reductase from Rickettsia bellii (strain OSU 85-389).